Consider the following 313-residue polypeptide: Dioxygenase swnH2 (313 aa).

The Fe cation site is built by H155, D157, and H232.

The protein belongs to the PhyH family. As to quaternary structure, homodimer. The cofactor is Fe cation.

The protein operates within mycotoxin biosynthesis. Functionally, aminotransferase; part of the gene cluster that mediates the biosynthesis of swainsonine (SW), a cytotoxic fungal alkaloid and a potential cancer therapy drug. Swainsonine production occurs via a multibranched pathway and is dispensable for fungal colonization of plants and infection of insect hosts. The first step of swainsonine biosynthesis is the production of the precursor pipecolic acid (PA) via conversion of L-lysine (Lys) to 1-piperideine-6-carboxylate (P6C) by the aminotransferase swnA, the latter being further reduced to PA by the reductase swnR. The PKS-NRPS hybrid synthetase swnK uptakes and condensates PA and malonyl-CoA with and without skipping of the ketoreductase (KR) domain in order to produce 3 intermediates, 1-oxoindolizidine, (1S)-1-hydroxyindolizin, and (1R)-1-hydroxyindolizine; with the transisomer (1S)-1-hydroxyindolizin being predominant. The terminal thioester reductase (TE) domain of swnK is involved in reduction of the thioester bond to release the intermediate aldehydes. The oxidoreductase swnN could contribute to the reduction of 1-oxoindolizidine to (1S)-1-hydroxyindolizin and (1R)-1-hydroxyindolizine, contributing to the major route of SW production. The dioxygenase swnH2 would be responsible for the oxidization of (1R)-1-hydroxyindolizine into (1R,2S)-1,2-dihydroxyindolizine and of (1S)-1-hydroxyindolizin to yield both (1R,2S)-1,2-dihydroxyindolizine and (1S,2S)-1,2-dihydroxyindolizine. The dioxygenase swnH1 then performs the conversion of the 1,2-dihydroxyindolizine epimers to SW. The chain is Dioxygenase swnH2 from Arthroderma benhamiae (strain ATCC MYA-4681 / CBS 112371) (Trichophyton mentagrophytes).